Here is a 412-residue protein sequence, read N- to C-terminus: Phosphoglycerate kinase (412 aa).

Substrate is bound by residues 24–26 (DLN), Arg40, 63–66 (HLGR), Arg122, and Arg162. ATP-binding positions include Lys212, Gly300, Glu331, and 360-363 (GGDS).

This sequence belongs to the phosphoglycerate kinase family. Monomer.

It localises to the cytoplasm. The catalysed reaction is (2R)-3-phosphoglycerate + ATP = (2R)-3-phospho-glyceroyl phosphate + ADP. It participates in carbohydrate degradation; glycolysis; pyruvate from D-glyceraldehyde 3-phosphate: step 2/5. This is Phosphoglycerate kinase (pgk) from Mycobacterium bovis (strain ATCC BAA-935 / AF2122/97).